The following is a 686-amino-acid chain: Methionine--tRNA ligase (686 aa).

Residues 15 to 25 (PYANGPIHLGH) carry the 'HIGH' region motif. The Zn(2+) site is built by cysteine 146, cysteine 149, cysteine 159, and cysteine 162. The 'KMSKS' region motif lies at 331–335 (KMSKS). An ATP-binding site is contributed by lysine 334. A tRNA-binding domain is found at 584-686 (DFAKIDLRVA…AGVKAGSRVM (103 aa)).

This sequence belongs to the class-I aminoacyl-tRNA synthetase family. MetG type 1 subfamily. As to quaternary structure, homodimer. Requires Zn(2+) as cofactor.

It is found in the cytoplasm. The catalysed reaction is tRNA(Met) + L-methionine + ATP = L-methionyl-tRNA(Met) + AMP + diphosphate. Its function is as follows. Is required not only for elongation of protein synthesis but also for the initiation of all mRNA translation through initiator tRNA(fMet) aminoacylation. The chain is Methionine--tRNA ligase from Mannheimia succiniciproducens (strain KCTC 0769BP / MBEL55E).